The sequence spans 251 residues: Extracellular superoxide dismutase [Cu-Zn] (251 aa).

The signal sequence occupies residues 1-15; that stretch reads MLAFLFYGLLLAACG. The propeptide occupies 16–24; that stretch reads SVTMSNPGE. Intrachain disulfides connect Cys-77-Cys-222 and Cys-139-Cys-221. N-linked (GlcNAc...) asparagine glycosylation occurs at Asn-121. Cu cation-binding residues include His-128, His-130, and His-145. Positions 145, 153, 156, and 159 each coordinate Zn(2+). Residue His-195 coordinates Cu cation. Residues 230-251 are disordered; the sequence is AAWESQTKERKKRRRESECKTT.

It belongs to the Cu-Zn superoxide dismutase family. In terms of assembly, homotetramer. Directly interacts with ATP7A/MNK; this interaction is copper-dependent and is required for SOD3 activity. Cu cation is required as a cofactor. Zn(2+) serves as cofactor.

It is found in the secreted. Its subcellular location is the extracellular space. The protein resides in the golgi apparatus. The protein localises to the trans-Golgi network. The catalysed reaction is 2 superoxide + 2 H(+) = H2O2 + O2. Functionally, protect the extracellular space from toxic effect of reactive oxygen intermediates by converting superoxide radicals into hydrogen peroxide and oxygen. The polypeptide is Extracellular superoxide dismutase [Cu-Zn] (Sod3) (Mus musculus (Mouse)).